Consider the following 591-residue polypeptide: Pentatricopeptide repeat-containing protein At2g35130 (591 aa).

PPR repeat units lie at residues 154–188, 189–223, 227–262, 263–297, 298–332, 333–367, 368–402, 403–437, 438–472, 473–507, 508–542, and 543–573; these read DVICFNLLIDAYGQKFQYKEAESLYVQLLESRYVP, TEDTYALLIKAYCMAGLIERAEVVLVEMQNHHVSP, GVTVYNAYIEGLMKRKGNTEEAIDVFQRMKRDRCKP, TTETYNLMINLYGKASKSYMSWKLYCEMRSHQCKP, NICTYTALVNAFAREGLCEKAEEIFEQLQEDGLEP, DVYVYNALMESYSRAGYPYGAAEIFSLMQHMGCEP, DRASYNIMVDAYGRAGLHSDAEAVFEEMKRLGIAP, TMKSHMLLLSAYSKARDVTKCEAIVKEMSENGVEP, DTFVLNSMLNLYGRLGQFTKMEKILAEMENGPCTA, DISTYNILINIYGKAGFLERIEELFVELKEKNFRP, DVVTWTSRIGAYSRKKLYVKCLEVFEEMIDSGCAP, and DGGTAKVLLSACSSEEQVEQVTSVLRTMHKG.

This sequence belongs to the PPR family. P subfamily.

This chain is Pentatricopeptide repeat-containing protein At2g35130, found in Arabidopsis thaliana (Mouse-ear cress).